Here is an 87-residue protein sequence, read N- to C-terminus: MNGNQIKQLKKLYRHILNEASKFENINYNVYFSNKAKEKFREFCSDTNFESEKLKTFQNECWDYLNMLKRQTIIHNLYHVDKPLVNK.

The protein belongs to the complex I LYR family. As to quaternary structure, interacts with IscS; the interaction enhances cysteine desulfurase activity of IscS. Component of a complex, at least composed of IscS, Isd11 and IscU.

Its subcellular location is the mitochondrion. It participates in cofactor biosynthesis; iron-sulfur cluster biosynthesis. Functionally, participates in iron-sulfur cluster formation (ISC) pathway for iron-sulfur (Fe-S) cluster biogenesis. Enhances cysteine desulfurase activity of IscS. The polypeptide is Protein Isd11 (Plasmodium falciparum (isolate 3D7)).